A 254-amino-acid chain; its full sequence is tRNA threonylcarbamoyladenosine dehydratase (254 aa).

The protein belongs to the HesA/MoeB/ThiF family.

Catalyzes the ATP-dependent dehydration of threonylcarbamoyladenosine at position 37 (t(6)A37) to form cyclic t(6)A37 (ct(6)A37) in tRNAs that read codons beginning with adenine. The protein is tRNA threonylcarbamoyladenosine dehydratase (tcdA) of Bacillus subtilis (strain 168).